The primary structure comprises 768 residues: Putative calcium up-regulated protein H (768 aa).

The interval 1–22 is disordered; the sequence is MINIEDISKSSNQSEEKQLKST. Ricin B-type lectin domains follow at residues 25 to 145 and 116 to 248; these read KPKY…WTTF and QGNG…WGIN.

The protein belongs to the cup family.

Its subcellular location is the cytoplasm. It localises to the membrane. Its function is as follows. May play an important role in stabilizing and/or regulating the cell membrane during Ca(2+) stress or certain stages of development. This Dictyostelium discoideum (Social amoeba) protein is Putative calcium up-regulated protein H (cupH).